We begin with the raw amino-acid sequence, 239 residues long: Ribosomal RNA large subunit methyltransferase E (239 aa).

Residues 1–20 are disordered; sequence MTKAPIAGNRTGRKLGQRVK. Basic residues predominate over residues 11 to 20; it reads TGRKLGQRVK. S-adenosyl-L-methionine is bound by residues glycine 81, tryptophan 83, aspartate 104, aspartate 120, and aspartate 144. Lysine 184 acts as the Proton acceptor in catalysis.

Belongs to the class I-like SAM-binding methyltransferase superfamily. RNA methyltransferase RlmE family.

The protein localises to the cytoplasm. The enzyme catalyses uridine(2552) in 23S rRNA + S-adenosyl-L-methionine = 2'-O-methyluridine(2552) in 23S rRNA + S-adenosyl-L-homocysteine + H(+). Functionally, specifically methylates the uridine in position 2552 of 23S rRNA at the 2'-O position of the ribose in the fully assembled 50S ribosomal subunit. This chain is Ribosomal RNA large subunit methyltransferase E, found in Rhizobium leguminosarum bv. trifolii (strain WSM2304).